The chain runs to 99 residues: MSKQAVLLDEAARQSLYSSCPAWTIASDGLVREWRFHSFVEAFGFMTQVALLAERANHHPEWSNVYNRVTIRLTTHDLGGLSSRDAELAQAIDSLSPTT.

Belongs to the pterin-4-alpha-carbinolamine dehydratase family.

The enzyme catalyses (4aS,6R)-4a-hydroxy-L-erythro-5,6,7,8-tetrahydrobiopterin = (6R)-L-erythro-6,7-dihydrobiopterin + H2O. This chain is Putative pterin-4-alpha-carbinolamine dehydratase, found in Synechococcus sp. (strain CC9311).